A 127-amino-acid polypeptide reads, in one-letter code: Cytochrome b-c1 complex subunit 7, mitochondrial (127 aa).

The protein belongs to the UQCRB/QCR7 family. In terms of assembly, component of the ubiquinol-cytochrome c oxidoreductase (cytochrome b-c1 complex, complex III, CIII), a multisubunit enzyme composed of 10 subunits. The complex is composed of 3 respiratory subunits cytochrome b (COB), cytochrome c1 (CYT1) and Rieske protein (RIP1), 2 core protein subunits COR1 and QCR2, and 5 low-molecular weight protein subunits QCR6, QCR7, QCR8, QCR9 and QCR10. The complex exists as an obligatory dimer and forms supercomplexes (SCs) in the inner mitochondrial membrane with a monomer or a dimer of cytochrome c oxidase (complex IV, CIV), resulting in 2 different assemblies (supercomplexes III(2)IV and III(2)IV(2)).

The protein resides in the mitochondrion inner membrane. In terms of biological role, component of the ubiquinol-cytochrome c oxidoreductase, a multisubunit transmembrane complex that is part of the mitochondrial electron transport chain which drives oxidative phosphorylation. Plays an important role in the uptake of multiple carbon sources such acetate, lactate, amino acids or GlcNAc present in different host niches. The chain is Cytochrome b-c1 complex subunit 7, mitochondrial from Candida albicans (strain SC5314 / ATCC MYA-2876) (Yeast).